The chain runs to 629 residues: Transferrin (629 aa).

Positions M1–A21 are cleaved as a signal peptide. 2 consecutive Transferrin-like domains span residues Y26–G366 and M372–C621. Cystine bridges form between C29/C63 and C38/C54. Residue Y111 participates in Fe(3+) binding. 6 cysteine pairs are disulfide-bonded: C135–C231, C184–C210, C207–C216, C270–C283, C375–C409, and C385–C403. The hydrogencarbonate site is built by T137, R141, V143, and G144. Y225 serves as a coordination point for Fe(3+). The Fe(3+) site is built by D408 and H561.

The protein belongs to the transferrin family. In terms of assembly, monomer.

Its function is as follows. Transferrins are iron binding transport proteins which bind Fe(3+) ion in association with the binding of an anion, usually bicarbonate. This transferrin binds only one Fe(3+) ion per protein molecule. Transports iron ions from the hemolymph into the eggs during the vitellogenic stage (oogenesis). The chain is Transferrin from Sarcophaga peregrina (Flesh fly).